The chain runs to 471 residues: MPRTIIEKIWDQHVVKSGEGKPDLLYIDLHLVHEVTSPQAFEGLRQKGRKVRRPQNTFATMDHNIPTVNRFVIKDEIAKKQVGALERNCAEFGVRLADLHSVDQGIVHVVGPELGLTLPGKTIVCGDSHTSTHGAFGALAFGIGTSEVEHVLSTQTLWQQRPKTLEIRVDGKLQKGVTAKDVILAVIGAHGVKFGSGYVIEYTGEVFRNMTMDERMTVCNMSIEAGARAGLIAPDEVTFEYCRGRKYAPQGEDFEAAIKEWEELKTDPGATYDKTIVLDGNEISPMVTWGINPGMVLPVDASIPGPEDFAQEDDQKEAIRAYEYMGVHPHQRIEDITIEHVFIGSCTNSRMTDLRQAASMIEGQKVADHVRAIVVPGSQSVKLQAEEEGLHKIFLEAGFEWRESGCSMCLSMNNDVVPEGERCASTSNRNFEGRQGKGARTHLVSPAMAAMAAIHGRFVDVRKFNQEKTVV.

Positions 346, 406, and 409 each coordinate [4Fe-4S] cluster.

This sequence belongs to the aconitase/IPM isomerase family. LeuC type 1 subfamily. In terms of assembly, heterodimer of LeuC and LeuD. [4Fe-4S] cluster is required as a cofactor.

The catalysed reaction is (2R,3S)-3-isopropylmalate = (2S)-2-isopropylmalate. It functions in the pathway amino-acid biosynthesis; L-leucine biosynthesis; L-leucine from 3-methyl-2-oxobutanoate: step 2/4. Catalyzes the isomerization between 2-isopropylmalate and 3-isopropylmalate, via the formation of 2-isopropylmaleate. This chain is 3-isopropylmalate dehydratase large subunit, found in Bacillus pumilus (strain SAFR-032).